The following is a 461-amino-acid chain: ATP synthase subunit beta 2 (461 aa).

An ATP-binding site is contributed by 151-158 (GGAGVGKT).

Belongs to the ATPase alpha/beta chains family. As to quaternary structure, F-type ATPases have 2 components, CF(1) - the catalytic core - and CF(0) - the membrane proton channel. CF(1) has five subunits: alpha(3), beta(3), gamma(1), delta(1), epsilon(1). CF(0) has three main subunits: a(1), b(2) and c(9-12). The alpha and beta chains form an alternating ring which encloses part of the gamma chain. CF(1) is attached to CF(0) by a central stalk formed by the gamma and epsilon chains, while a peripheral stalk is formed by the delta and b chains.

It is found in the cell inner membrane. The enzyme catalyses ATP + H2O + 4 H(+)(in) = ADP + phosphate + 5 H(+)(out). In terms of biological role, produces ATP from ADP in the presence of a proton gradient across the membrane. The catalytic sites are hosted primarily by the beta subunits. This is ATP synthase subunit beta 2 from Photobacterium profundum (strain SS9).